The following is a 246-amino-acid chain: 14-3-3 protein beta/alpha (246 aa).

N-acetylmethionine is present on methionine 1. Threonine 2 bears the N-acetylthreonine; in 14-3-3 protein beta/alpha, N-terminally processed mark. The residue at position 2 (threonine 2) is a Phosphothreonine. Lysine 5 is modified (N6-acetyllysine). An N6-acetyllysine; alternate modification is found at lysine 51. Residue lysine 51 forms a Glycyl lysine isopeptide (Lys-Gly) (interchain with G-Cter in SUMO2); alternate linkage. Phosphoserine is present on serine 60. Lysine 70 is modified (N6-acetyllysine). Residues tyrosine 84 and tyrosine 106 each carry the 3'-nitrotyrosine modification. The residue at position 117 (lysine 117) is an N6-acetyllysine. A phosphoserine mark is found at serine 186 and serine 232.

It belongs to the 14-3-3 family. As to quaternary structure, homodimer. Interacts with SAMSN1 and PRKCE. Interacts with AKAP13. Interacts with SSH1 and TORC2/CRTC2. Interacts with ABL1; the interaction results in cytoplasmic location of ABL1 and inhibition of cABL-mediated apoptosis. Interacts with ROR2 (dimer); the interaction results in phosphorylation of YWHAB on tyrosine residues. Interacts with GAB2. Interacts with YAP1 (phosphorylated form). Interacts with the phosphorylated (by AKT1) form of SRPK2. Interacts with PKA-phosphorylated AANAT. Interacts with MYO1C. Interacts with SIRT2. Interacts with the 'Thr-369' phosphorylated form of DAPK2. Interacts with PI4KB, TBC1D22A and TBC1D22B. Interacts with the 'Ser-1134' and 'Ser-1161' phosphorylated form of SOS1. Interacts (via phosphorylated form) with YWHAB; this interaction occurs in a protein kinase AKT1-dependent manner. Interacts with SLITRK1. Interacts with SYNPO2 (phosphorylated form); YWHAB competes with ACTN2 for interaction with SYNPO2. Interacts with RIPOR2 (via phosphorylated form); this interaction occurs in a chemokine-dependent manner and does not compete for binding of RIPOR2 with RHOA nor blocks inhibition of RIPOR2-mediated RHOA activity. Interacts with MARK2 and MARK3. Interacts with TESK1; the interaction is dependent on the phosphorylation of TESK1 'Ser-439' and inhibits TESK1 kinase activity. Interacts with MEFV. Interacts with HDAC4. Interacts with ADAM22 (via C-terminus). Isoform alpha differs from isoform beta in being phosphorylated. Phosphorylated on Ser-60 by protein kinase C delta type catalytic subunit in a sphingosine-dependent fashion. Post-translationally, isoform Short contains a N-acetylmethionine at position 1.

The protein localises to the cytoplasm. It localises to the melanosome. Functionally, adapter protein implicated in the regulation of a large spectrum of both general and specialized signaling pathways. Binds to a large number of partners, usually by recognition of a phosphoserine or phosphothreonine motif. Binding generally results in the modulation of the activity of the binding partner. Negative regulator of osteogenesis. Blocks the nuclear translocation of the phosphorylated form (by AKT1) of SRPK2 and antagonizes its stimulatory effect on cyclin D1 expression resulting in blockage of neuronal apoptosis elicited by SRPK2. Negative regulator of signaling cascades that mediate activation of MAP kinases via AKAP13. This chain is 14-3-3 protein beta/alpha (Ywhab), found in Mus musculus (Mouse).